The following is a 401-amino-acid chain: SVP1-like protein 2 (401 aa).

WD repeat units lie at residues 222 to 262 (AHKN…LIHE) and 267 to 306 (LDRA…DKRH).

It belongs to the WD repeat PROPPIN family.

The protein localises to the vacuole membrane. It is found in the cytoplasmic vesicle membrane. Involved in mitochondrial or peroxisomal functions and amino acid signaling pathways. The sequence is that of SVP1-like protein 2 (HSV2) from Eremothecium gossypii (strain ATCC 10895 / CBS 109.51 / FGSC 9923 / NRRL Y-1056) (Yeast).